A 440-amino-acid chain; its full sequence is Sialyltransferase-like protein 2 (440 aa).

At 1–5 the chain is on the cytoplasmic side; it reads MKLLH. A helical; Signal-anchor for type II membrane protein transmembrane segment spans residues 6 to 26; that stretch reads LIFLLALTTGISAVLIYIIGV. The Lumenal segment spans residues 27 to 440; it reads SNLYESNRFT…HGQLCITPAD (414 aa). N-linked (GlcNAc...) asparagine glycans are attached at residues Asn-113 and Asn-149.

Belongs to the glycosyltransferase 29 family.

The protein localises to the golgi apparatus membrane. In terms of biological role, may be involved in the transfer of 2-keto-3-deoxy-D-lyxo-heptulosaric acid (Dha) and/or 2-keto-3-deoxy-D-manno-octulosonic acid (Kdo) on the homogalacturonan backbone of rhamnogalacturonan-II. Required for efficient pollen grain germination and pollen tube elongation. Does not possess sialyltransferase activity in vitro. This is Sialyltransferase-like protein 2 from Arabidopsis thaliana (Mouse-ear cress).